A 145-amino-acid chain; its full sequence is Maximins 5/H4 type 1 (145 aa).

The signal sequence occupies residues 1-18 (MNFKYIVAVSFLIASAYA). 2 propeptides span residues 19-43 (RSVQ…REIR) and 74-124 (TAEE…KEKR). Leucine amide is present on Leu-144.

This sequence belongs to the bombinin family. In terms of tissue distribution, expressed by the skin glands.

It is found in the secreted. Maximin-5 shows antibacterial activity against both Gram-positive and Gram-negative bacteria. The only exception is the resistance of E.coli. Also shows antimicrobial activity against fungi C.albicans, A.flavus and P.uticale. It has little hemolytic activity. It does not possess a significant cytotoxicity against tumor cell lines. It does not possess a significant anti-HIV activity. Its function is as follows. Maximin-H4 shows antibacterial activity against both Gram-positive and Gram-negative bacteria. It also shows antimicrobial activity against the fungus C.albicans. Shows strong hemolytic activity. The protein is Maximins 5/H4 type 1 of Bombina maxima (Giant fire-bellied toad).